The sequence spans 192 residues: Erythropoietin (192 aa).

The N-terminal stretch at Met1–Cys26 is a signal peptide. An intrachain disulfide couples Cys33 to Cys187. Asn50, Asn64, and Asn109 each carry an N-linked (GlcNAc...) asparagine glycan.

The protein belongs to the EPO/TPO family. As to expression, produced by kidney or liver of adult mammals and by liver of fetal or neonatal mammals.

The protein resides in the secreted. In terms of biological role, hormone involved in the regulation of erythrocyte proliferation and differentiation and the maintenance of a physiological level of circulating erythrocyte mass. Binds to EPOR leading to EPOR dimerization and JAK2 activation thereby activating specific downstream effectors, including STAT1 and STAT3. The protein is Erythropoietin (Epo) of Mus musculus (Mouse).